Consider the following 367-residue polypeptide: Leu/Ile/Val-binding protein (367 aa).

Residues Met-1 to Ala-23 form the signal peptide. An intrachain disulfide couples Cys-76 to Cys-101.

This sequence belongs to the leucine-binding protein family.

The protein localises to the periplasm. This protein is a component of the leucine, isoleucine, valine, (threonine) transport system, which is one of the two periplasmic binding protein-dependent transport systems of the high-affinity transport of the branched-chain amino acids. In Escherichia coli O157:H7, this protein is Leu/Ile/Val-binding protein (livJ).